The following is a 187-amino-acid chain: Pre-mRNA-splicing factor cwf7 (187 aa).

Belongs to the SPF27 family. In terms of assembly, belongs to the 40S cdc5-associated complex (or cwf complex), a spliceosome sub-complex reminiscent of a late-stage spliceosome composed of the U2, U5 and U6 snRNAs and at least brr2, cdc5, cwf2/prp3, cwf3/syf1, cwf4/syf3, cwf5/ecm2, spp42/cwf6, cwf7/spf27, cwf8, cwf9, cwf10, cwf11, cwf12, prp45/cwf13, cwf14, cwf15, cwf16, cwf17, cwf18, cwf19, cwf20, cwf21, cwf22, cwf23, cwf24, cwf25, cwf26, cyp7/cwf27, cwf28, cwf29/ist3, lea1, msl1, prp5/cwf1, prp10, prp12/sap130, prp17, prp22, sap61, sap62, sap114, sap145, slu7, smb1, smd1, smd3, smf1, smg1 and syf2.

It is found in the nucleus. Functionally, involved in mRNA splicing. This is Pre-mRNA-splicing factor cwf7 (cwf7) from Schizosaccharomyces pombe (strain 972 / ATCC 24843) (Fission yeast).